The sequence spans 74 residues: Translational regulator CsrA (74 aa).

The protein belongs to the CsrA/RsmA family. In terms of assembly, homodimer; the beta-strands of each monomer intercalate to form a hydrophobic core, while the alpha-helices form wings that extend away from the core.

Its subcellular location is the cytoplasm. Functionally, a translational regulator that binds mRNA to regulate translation initiation and/or mRNA stability. Usually binds in the 5'-UTR at or near the Shine-Dalgarno sequence preventing ribosome-binding, thus repressing translation. Its main target seems to be the major flagellin gene, while its function is anatagonized by FliW. This Bacillus velezensis (strain DSM 23117 / BGSC 10A6 / LMG 26770 / FZB42) (Bacillus amyloliquefaciens subsp. plantarum) protein is Translational regulator CsrA.